We begin with the raw amino-acid sequence, 535 residues long: Protoheme IX farnesyltransferase (535 aa).

A unknown region spans residues methionine 1–valine 263. 14 consecutive transmembrane segments (helical) span residues tryptophan 18 to proline 38, methionine 40 to tyrosine 60, tyrosine 83 to leucine 103, tryptophan 127 to alanine 147, valine 163 to leucine 183, leucine 197 to alanine 217, glycine 262 to isoleucine 282, tryptophan 285 to isoleucine 305, histidine 334 to valine 354, leucine 357 to leucine 377, isoleucine 385 to glycine 405, leucine 412 to isoleucine 432, leucine 474 to leucine 494, and alanine 509 to valine 529. A protoheme IX prenyltransferase region spans residues isoleucine 264–alanine 535.

The protein in the C-terminal section; belongs to the UbiA prenyltransferase family. Protoheme IX farnesyltransferase subfamily.

It localises to the cell membrane. It carries out the reaction heme b + (2E,6E)-farnesyl diphosphate + H2O = Fe(II)-heme o + diphosphate. Its pathway is porphyrin-containing compound metabolism; heme O biosynthesis; heme O from protoheme: step 1/1. Functionally, converts heme B (protoheme IX) to heme O by substitution of the vinyl group on carbon 2 of heme B porphyrin ring with a hydroxyethyl farnesyl side group. The protein is Protoheme IX farnesyltransferase (ctaB) of Roseiflexus castenholzii (strain DSM 13941 / HLO8).